We begin with the raw amino-acid sequence, 237 residues long: Urease accessory protein UreF (237 aa).

This sequence belongs to the UreF family. In terms of assembly, ureD, UreF and UreG form a complex that acts as a GTP-hydrolysis-dependent molecular chaperone, activating the urease apoprotein by helping to assemble the nickel containing metallocenter of UreC. The UreE protein probably delivers the nickel.

It is found in the cytoplasm. Required for maturation of urease via the functional incorporation of the urease nickel metallocenter. The chain is Urease accessory protein UreF from Streptococcus thermophilus (strain ATCC BAA-250 / LMG 18311).